Here is a 126-residue protein sequence, read N- to C-terminus: Hydrogenase maturation factor HypA (126 aa).

Residue His-2 coordinates Ni(2+). Residues Cys-78, Cys-81, Cys-97, and Cys-100 each contribute to the Zn(2+) site.

Belongs to the HypA/HybF family.

Its function is as follows. Involved in the maturation of [NiFe] hydrogenases. Required for nickel insertion into the metal center of the hydrogenase. This chain is Hydrogenase maturation factor HypA, found in Methanococcus maripaludis (strain C7 / ATCC BAA-1331).